A 102-amino-acid chain; its full sequence is Large ribosomal subunit protein bL21 (102 aa).

It belongs to the bacterial ribosomal protein bL21 family. As to quaternary structure, part of the 50S ribosomal subunit. Contacts protein L20.

This protein binds to 23S rRNA in the presence of protein L20. The chain is Large ribosomal subunit protein bL21 from Onion yellows phytoplasma (strain OY-M).